Consider the following 337-residue polypeptide: Anthranilate phosphoribosyltransferase (337 aa).

5-phospho-alpha-D-ribose 1-diphosphate contacts are provided by residues Gly-81, 84 to 85 (GD), Ser-89, 91 to 94 (NVST), 109 to 117 (KHGNRAATS), and Ala-121. Gly-81 is a binding site for anthranilate. Ser-93 is a Mg(2+) binding site. Asn-112 is an anthranilate binding site. An anthranilate-binding site is contributed by Arg-167. Mg(2+)-binding residues include Asp-226 and Glu-227.

This sequence belongs to the anthranilate phosphoribosyltransferase family. In terms of assembly, homodimer. Requires Mg(2+) as cofactor.

The catalysed reaction is N-(5-phospho-beta-D-ribosyl)anthranilate + diphosphate = 5-phospho-alpha-D-ribose 1-diphosphate + anthranilate. Its pathway is amino-acid biosynthesis; L-tryptophan biosynthesis; L-tryptophan from chorismate: step 2/5. Functionally, catalyzes the transfer of the phosphoribosyl group of 5-phosphorylribose-1-pyrophosphate (PRPP) to anthranilate to yield N-(5'-phosphoribosyl)-anthranilate (PRA). In Methylorubrum extorquens (strain PA1) (Methylobacterium extorquens), this protein is Anthranilate phosphoribosyltransferase.